The primary structure comprises 261 residues: Cytosolic Fe-S cluster assembly factor Nubp2 homolog (261 aa).

Residue Gly-14–Ser-21 coordinates ATP. Residues Cys-188 and Cys-191 each contribute to the [4Fe-4S] cluster site.

This sequence belongs to the Mrp/NBP35 ATP-binding proteins family. NUBP2/CFD1 subfamily. In terms of assembly, heterotetramer of 2 Nubp1 and 2 Nubp2 chains. It depends on [4Fe-4S] cluster as a cofactor.

Its subcellular location is the cytoplasm. Component of the cytosolic iron-sulfur (Fe/S) protein assembly (CIA) machinery. Required for maturation of extramitochondrial Fe-S proteins. The Nubp1-Nubp2 heterotetramer forms a Fe-S scaffold complex, mediating the de novo assembly of an Fe-S cluster and its transfer to target apoproteins. This chain is Cytosolic Fe-S cluster assembly factor Nubp2 homolog, found in Drosophila ananassae (Fruit fly).